A 491-amino-acid polypeptide reads, in one-letter code: Probable cytosol aminopeptidase (491 aa).

Positions 260 and 265 each coordinate Mn(2+). The active site involves lysine 272. Residues aspartate 284, aspartate 343, and glutamate 345 each coordinate Mn(2+). The active site involves arginine 347.

This sequence belongs to the peptidase M17 family. Mn(2+) serves as cofactor.

It localises to the cytoplasm. The catalysed reaction is Release of an N-terminal amino acid, Xaa-|-Yaa-, in which Xaa is preferably Leu, but may be other amino acids including Pro although not Arg or Lys, and Yaa may be Pro. Amino acid amides and methyl esters are also readily hydrolyzed, but rates on arylamides are exceedingly low.. The enzyme catalyses Release of an N-terminal amino acid, preferentially leucine, but not glutamic or aspartic acids.. Presumably involved in the processing and regular turnover of intracellular proteins. Catalyzes the removal of unsubstituted N-terminal amino acids from various peptides. In Rippkaea orientalis (strain PCC 8801 / RF-1) (Cyanothece sp. (strain PCC 8801)), this protein is Probable cytosol aminopeptidase.